Reading from the N-terminus, the 210-residue chain is Probable GTP-binding protein EngB (210 aa).

An EngB-type G domain is found at 25-199 (TGIEVAFAGR…RQKLDTWFSE (175 aa)). GTP is bound by residues 33 to 40 (GRSNAGKS), 60 to 64 (GRTQL), 78 to 81 (DLPG), 145 to 148 (TKAD), and 178 to 180 (FSS). Mg(2+)-binding residues include Ser40 and Thr62.

This sequence belongs to the TRAFAC class TrmE-Era-EngA-EngB-Septin-like GTPase superfamily. EngB GTPase family. Mg(2+) serves as cofactor.

Necessary for normal cell division and for the maintenance of normal septation. The chain is Probable GTP-binding protein EngB from Shigella boydii serotype 4 (strain Sb227).